A 332-amino-acid chain; its full sequence is MTLDQKGLKKRSVTVAYFFNNIGKKHDIRLRRMNTVDEQERRIFERDLHRPGLALAGFTNLFTYKRLQILGNTETRFLNHLGEEERKAAFANLTRFKVPCIILTSNNKLQPELLDMATAAGIPVYVTRQSSTKAIYLVTDFLDDQFSLYQQYHGSMVDVYGVGVLLTGKSGLGKSEIALDLVERGHGLVADDVVVIRRKGETMQLSASRNNIIDHFMEIRGLGVVDVKANFGIRAIRDVKEVLVVVELLEWNKEMEYERLGLDTKTIRILGVDVPLVQLPIFPGKNITVIIEVVALNFLLKRYSNYVAAEALTDRIKKVIHNDDRTAGDILV.

Catalysis depends on residues histidine 153 and lysine 174. ATP is bound at residue 168-175; that stretch reads GKSGLGKS. Serine 175 is a binding site for Mg(2+). Aspartate 192 functions as the Proton acceptor; for phosphorylation activity. Proton donor; for dephosphorylation activity in the catalytic mechanism. Residues 217–226 form an important for the catalytic mechanism of both phosphorylation and dephosphorylation region; it reads MEIRGLGVVD. Glutamate 218 contacts Mg(2+). Arginine 259 is a catalytic residue. Positions 280 to 285 are important for the catalytic mechanism of dephosphorylation; the sequence is PIFPGK.

Belongs to the HPrK/P family. In terms of assembly, homohexamer. Requires Mg(2+) as cofactor.

It carries out the reaction [HPr protein]-L-serine + ATP = [HPr protein]-O-phospho-L-serine + ADP + H(+). It catalyses the reaction [HPr protein]-O-phospho-L-serine + phosphate + H(+) = [HPr protein]-L-serine + diphosphate. Functionally, catalyzes the ATP- as well as the pyrophosphate-dependent phosphorylation of a specific serine residue in HPr, a phosphocarrier protein of the phosphoenolpyruvate-dependent sugar phosphotransferase system (PTS). HprK/P also catalyzes the pyrophosphate-producing, inorganic phosphate-dependent dephosphorylation (phosphorolysis) of seryl-phosphorylated HPr (P-Ser-HPr). The polypeptide is HPr kinase/phosphorylase (Chlorobium luteolum (strain DSM 273 / BCRC 81028 / 2530) (Pelodictyon luteolum)).